The following is a 555-amino-acid chain: Wee1-like protein kinase 2 (555 aa).

The tract at residues 1–112 (MADTETDQGL…NFSTPKNSLG (112 aa)) is disordered. Ser-15 bears the Phosphoserine; by CaMK2 and PKA mark. Polar residues predominate over residues 26–41 (EGQMTAQDIGGAQSQK). The segment covering 57–72 (TRDELHTSLSRDKESP) has biased composition (basic and acidic residues). Ser-71 bears the Phosphoserine mark. Over residues 102-112 (TNFSTPKNSLG) the composition is skewed to polar residues. The Nuclear localization signal motif lies at 167-169 (KRK). Residues 208–485 (FFEIEKIGVG…ARSRILWPFL (278 aa)) enclose the Protein kinase domain. ATP is bound by residues 214–222 (IGVGEFGTV) and Lys-237. A Nuclear export signal motif is present at residues 310–324 (KLKDILLQISLGLKY). Asp-334 functions as the Proton acceptor in the catalytic mechanism. 2 residues coordinate Mg(2+): Asn-339 and Asp-375. Residues 488-514 (TDELQKQLNLEKSKTATLKRELKKARH) adopt a coiled-coil conformation.

Belongs to the protein kinase superfamily. Ser/Thr protein kinase family. WEE1 subfamily. Phosphorylated by PKA at Ser-15 in vitro, leading to activate kinase activity. Phosphorylation at Ser-15 by CaMK2, leading to increase its activity and promote metaphase II exit during egg activation. As to expression, ovary-specific.

It localises to the cytoplasm. Its subcellular location is the nucleus. It catalyses the reaction L-tyrosyl-[protein] + ATP = O-phospho-L-tyrosyl-[protein] + ADP + H(+). Functionally, oocyte-specific protein tyrosine kinase that phosphorylates and inhibits CDK1 and acts as a key regulator of meiosis during both prophase I and metaphase II. Required to maintain meiotic arrest in oocytes during the germinal vesicle (GV) stage, a long period of quiescence at dictyate prophase I, by phosphorylating CDK1 at 'Tyr-15', leading to inhibit CDK1 activity and prevent meiotic reentry. Also required for metaphase II exit during egg activation by phosphorylating CDK1 at 'Tyr-15', to ensure exit from meiosis in oocytes and promote pronuclear formation. In Mus musculus (Mouse), this protein is Wee1-like protein kinase 2 (Wee2).